The following is a 364-amino-acid chain: Carbamoyl phosphate synthase pyrimidine-specific small chain (364 aa).

Positions 1–169 (MKRYLVLEDG…AYPNPATGPN (169 aa)) are CPSase. Residues Ser-45, Gly-217, and Gly-219 each coordinate L-glutamine. The Glutamine amidotransferase type-1 domain maps to 169–356 (NVVVVDFGLK…IDLMAANQAT (188 aa)). The active-site Nucleophile is the Cys-244. Leu-245, Gln-248, Asn-286, Gly-288, and Tyr-289 together coordinate L-glutamine. Catalysis depends on residues His-329 and Asp-331.

The protein belongs to the CarA family. Composed of two chains; the small (or glutamine) chain promotes the hydrolysis of glutamine to ammonia, which is used by the large (or ammonia) chain to synthesize carbamoyl phosphate. Tetramer of heterodimers (alpha,beta)4.

It catalyses the reaction hydrogencarbonate + L-glutamine + 2 ATP + H2O = carbamoyl phosphate + L-glutamate + 2 ADP + phosphate + 2 H(+). It carries out the reaction L-glutamine + H2O = L-glutamate + NH4(+). It participates in pyrimidine metabolism; UMP biosynthesis via de novo pathway; (S)-dihydroorotate from bicarbonate: step 1/3. Inhibited by pyrimidine. In terms of biological role, small subunit of the glutamine-dependent carbamoyl phosphate synthetase (CPSase). CPSase catalyzes the formation of carbamoyl phosphate from the ammonia moiety of glutamine, carbonate, and phosphate donated by ATP, constituting the first step of the biosynthetic pathway leading to pyrimidine nucleotides. The small subunit (glutamine amidotransferase) binds and cleaves glutamine to supply the large subunit with the substrate ammonia. The sequence is that of Carbamoyl phosphate synthase pyrimidine-specific small chain from Lactiplantibacillus plantarum (strain ATCC BAA-793 / NCIMB 8826 / WCFS1) (Lactobacillus plantarum).